Here is a 363-residue protein sequence, read N- to C-terminus: NADH-quinone oxidoreductase subunit H (363 aa).

Transmembrane regions (helical) follow at residues Val-29 to Trp-49, Gly-62 to Phe-82, Phe-96 to Phe-116, Val-127 to Gly-147, Ala-163 to Ala-183, Phe-202 to Val-222, Ile-239 to Leu-257, Ile-264 to Val-286, Thr-299 to Phe-319, and Phe-339 to Ile-359.

Belongs to the complex I subunit 1 family. As to quaternary structure, NDH-1 is composed of 14 different subunits. Subunits NuoA, H, J, K, L, M, N constitute the membrane sector of the complex.

The protein localises to the cell inner membrane. It catalyses the reaction a quinone + NADH + 5 H(+)(in) = a quinol + NAD(+) + 4 H(+)(out). Its function is as follows. NDH-1 shuttles electrons from NADH, via FMN and iron-sulfur (Fe-S) centers, to quinones in the respiratory chain. The immediate electron acceptor for the enzyme in this species is believed to be ubiquinone. Couples the redox reaction to proton translocation (for every two electrons transferred, four hydrogen ions are translocated across the cytoplasmic membrane), and thus conserves the redox energy in a proton gradient. This subunit may bind ubiquinone. This chain is NADH-quinone oxidoreductase subunit H, found in Xanthomonas campestris pv. campestris (strain B100).